The primary structure comprises 155 residues: uncharacterized protein (155 aa).

Disordered regions lie at residues 1-22 (MSSQ…TFTF) and 110-155 (NKEP…DTQA). The residue at position 2 (Ser2) is an N-acetylserine. Residues Ser136, Ser144, and Ser146 each carry the phosphoserine modification. The span at 136–155 (SDEDLDAESDSDGEDGDTQA) shows a compositional bias: acidic residues.

This is an uncharacterized protein from Mus musculus (Mouse).